Reading from the N-terminus, the 488-residue chain is DNA polymerase II small subunit (488 aa).

The protein belongs to the DNA polymerase delta/II small subunit family. In terms of assembly, heterodimer of a large subunit and a small subunit.

The catalysed reaction is DNA(n) + a 2'-deoxyribonucleoside 5'-triphosphate = DNA(n+1) + diphosphate. The enzyme catalyses Exonucleolytic cleavage in the 3'- to 5'-direction to yield nucleoside 5'-phosphates.. Functionally, possesses two activities: a DNA synthesis (polymerase) and an exonucleolytic activity that degrades single-stranded DNA in the 3' to 5' direction. Has a template-primer preference which is characteristic of a replicative DNA polymerase. The protein is DNA polymerase II small subunit (polB) of Archaeoglobus fulgidus (strain ATCC 49558 / DSM 4304 / JCM 9628 / NBRC 100126 / VC-16).